Reading from the N-terminus, the 275-residue chain is Fructose-2,6-bisphosphatase TIGAR (275 aa).

His-11 (tele-phosphohistidine intermediate) is an active-site residue. Glu-89 acts as the Proton donor/acceptor in catalysis.

This sequence belongs to the phosphoglycerate mutase family.

Its subcellular location is the cytoplasm. The protein localises to the nucleus. It is found in the mitochondrion. The catalysed reaction is beta-D-fructose 2,6-bisphosphate + H2O = beta-D-fructose 6-phosphate + phosphate. Its function is as follows. Fructose-bisphosphatase hydrolyzing fructose-2,6-bisphosphate as well as fructose-1,6-bisphosphate. Acts as a negative regulator of glycolysis by lowering intracellular levels of fructose-2,6-bisphosphate in a p53/TP53-dependent manner, resulting in the pentose phosphate pathway (PPP) activation and NADPH production. Contributes to the generation of reduced glutathione to cause a decrease in intracellular reactive oxygen species (ROS) content, correlating with its ability to protect cells from oxidative or metabolic stress-induced cell death. May play a role in mitophagy inhibition. The chain is Fructose-2,6-bisphosphatase TIGAR from Xenopus laevis (African clawed frog).